We begin with the raw amino-acid sequence, 235 residues long: Small ribosomal subunit protein uS3 (235 aa).

The region spanning 39–107 (VRKFLNKELA…PAQINIAEVK (69 aa)) is the KH type-2 domain. The tract at residues 215–235 (AQSEQQPADKPKKAPRGKGRK) is disordered.

It belongs to the universal ribosomal protein uS3 family. As to quaternary structure, part of the 30S ribosomal subunit. Forms a tight complex with proteins S10 and S14.

Its function is as follows. Binds the lower part of the 30S subunit head. Binds mRNA in the 70S ribosome, positioning it for translation. The chain is Small ribosomal subunit protein uS3 from Haemophilus influenzae (strain PittEE).